The primary structure comprises 300 residues: Cation-efflux pump FieF (300 aa).

Helical transmembrane passes span 12 to 32 (AAIAATAMASLLLLIKIFAWW), 39 to 59 (ILAALVDSLVDIGASLTNLLV), 82 to 102 (AALAQSMFISGSALFLFLTGI), and 114 to 134 (PGVGVIVTIVALICTIILVSF). Positions 45 and 49 each coordinate Zn(2+). Zn(2+) is bound by residues H153 and D157. Helical transmembrane passes span 156-176 (SDVMMNGAILLALGLSWYGWH) and 178-198 (ADALFALGIGIYILYSALRMG).

The protein belongs to the cation diffusion facilitator (CDF) transporter (TC 2.A.4) family. FieF subfamily. In terms of assembly, homodimer.

Its subcellular location is the cell inner membrane. It carries out the reaction Zn(2+)(in) + H(+)(out) = Zn(2+)(out) + H(+)(in). The catalysed reaction is Cd(2+)(in) + H(+)(out) = Cd(2+)(out) + H(+)(in). The enzyme catalyses Fe(2+)(in) + H(+)(out) = Fe(2+)(out) + H(+)(in). Functionally, divalent metal cation transporter which exports Zn(2+), Cd(2+) and possibly Fe(2+). May be involved in zinc and iron detoxification by efflux. The polypeptide is Cation-efflux pump FieF (Shigella boydii serotype 18 (strain CDC 3083-94 / BS512)).